We begin with the raw amino-acid sequence, 462 residues long: Multidrug resistance protein NorM (462 aa).

Transmembrane regions (helical) follow at residues 56 to 76 (LAAGGLGANFFFVIVTVLQGV), 99 to 119 (IYWTGFVLSVLLAIPAVVALS), 147 to 167 (FAALGSLIGVGLMRAFLPAIG), 172 to 192 (LLWVSIGGIGVNAVLNYGLIH), 202 to 222 (FLGSAVATTITIWLTAFALIW), 247 to 267 (LIGIGWPVAITYGVESTLFLA), 280 to 300 (LAAHQIALNVASVAFMVPLAI), 325 to 345 (FVALGLGVAFMSLSGLVLILA), 361 to 381 (NAATVSLAASLLGIAAVFQIV), 402 to 422 (MLAATFGYWGIGFPTGYWLAF), and 430 to 450 (GLWWGLAAGLASVAVLMAWRF).

It belongs to the multi antimicrobial extrusion (MATE) (TC 2.A.66.1) family.

Its subcellular location is the cell inner membrane. Functionally, multidrug efflux pump. Confers probably resistance to the cationic peptide polymyxin B (PMB). In Burkholderia vietnamiensis, this protein is Multidrug resistance protein NorM (norM).